Reading from the N-terminus, the 135-residue chain is Large ribosomal subunit protein uL16c (135 aa).

It belongs to the universal ribosomal protein uL16 family. In terms of assembly, part of the 50S ribosomal subunit.

The protein localises to the plastid. It localises to the chloroplast. This is Large ribosomal subunit protein uL16c from Euglena gracilis.